The sequence spans 257 residues: Imidazole glycerol phosphate synthase subunit HisF (257 aa).

Residues Asp-11 and Asp-130 contribute to the active site.

It belongs to the HisA/HisF family. Heterodimer of HisH and HisF.

It is found in the cytoplasm. It catalyses the reaction 5-[(5-phospho-1-deoxy-D-ribulos-1-ylimino)methylamino]-1-(5-phospho-beta-D-ribosyl)imidazole-4-carboxamide + L-glutamine = D-erythro-1-(imidazol-4-yl)glycerol 3-phosphate + 5-amino-1-(5-phospho-beta-D-ribosyl)imidazole-4-carboxamide + L-glutamate + H(+). The protein operates within amino-acid biosynthesis; L-histidine biosynthesis; L-histidine from 5-phospho-alpha-D-ribose 1-diphosphate: step 5/9. Functionally, IGPS catalyzes the conversion of PRFAR and glutamine to IGP, AICAR and glutamate. The HisF subunit catalyzes the cyclization activity that produces IGP and AICAR from PRFAR using the ammonia provided by the HisH subunit. The sequence is that of Imidazole glycerol phosphate synthase subunit HisF from Actinobacillus succinogenes (strain ATCC 55618 / DSM 22257 / CCUG 43843 / 130Z).